A 791-amino-acid polypeptide reads, in one-letter code: Genome polyprotein (791 aa).

Residues 1 to 15 (MNNQRKKTGRPSFNM) are interaction with host EXOC1. At 1–101 (MNNQRKKTGR…LNIMNRRKRS (101 aa)) the chain is on the cytoplasmic side. The tract at residues 37–72 (LLSGQGPMKLVMAFIAFLRFLAIPPTAGILARWSSF) is hydrophobic; homodimerization of capsid protein C. The propeptide at 101–114 (SVTMLLMLLPTALA) is ER anchor for the capsid protein C, removed in mature form by serine protease NS3. Residues 102–119 (VTMLLMLLPTALAFHLTT) form a helical membrane-spanning segment. Residues 120 to 242 (RGGEPTLIVS…QIQKVETWAL (123 aa)) lie on the Extracellular side of the membrane. Asparagine 183 is a glycosylation site (N-linked (GlcNAc...) asparagine; by host). A helical transmembrane segment spans residues 243–260 (RHPGFTVIGLFLAHAIGT). Residue serine 261 is a topological domain, cytoplasmic. Residues 262–280 (ITQKGIIFILLMLVTPSMA) form a helical membrane-spanning segment. The Extracellular portion of the chain corresponds to 281 to 725 (MRCVGIGNRD…IHQIFGTAYG (445 aa)). 4 disulfides stabilise this stretch: cysteine 283–cysteine 310, cysteine 340–cysteine 401, cysteine 354–cysteine 385, and cysteine 372–cysteine 396. Asparagine 347 carries an N-linked (GlcNAc...) asparagine; by host glycan. Positions 378–391 (DRGWGNGCGLFGKG) are fusion peptide. Asparagine 433 is a glycosylation site (N-linked (GlcNAc...) asparagine; by host). Intrachain disulfides connect cysteine 465–cysteine 565 and cysteine 582–cysteine 613. The helical transmembrane segment at 726-746 (ILFSGVSWTMKIGIGILLTWL) threads the bilayer. The Cytoplasmic segment spans residues 747-752 (GLNSRS). Residues 753 to 775 (TSLSMTCIAVGMVTLYLGVMVQA) form a helical membrane-spanning segment. Residues 776–791 (DSGCVINWKGKELKCG) are Extracellular-facing. Cysteine 779 and cysteine 790 are disulfide-bonded.

As to quaternary structure, homodimer. Interacts (via N-terminus) with host EXOC1 (via C-terminus); this interaction results in EXOC1 degradation through the proteasome degradation pathway. Forms heterodimers with envelope protein E in the endoplasmic reticulum and Golgi. In terms of assembly, homodimer; in the endoplasmic reticulum and Golgi. Interacts with protein prM. Interacts with non-structural protein 1. As to quaternary structure, homodimer; Homohexamer when secreted. Interacts with envelope protein E. In terms of processing, specific enzymatic cleavages in vivo yield mature proteins. Cleavages in the lumen of endoplasmic reticulum are performed by host signal peptidase, wereas cleavages in the cytoplasmic side are performed by serine protease NS3. Signal cleavage at the 2K-4B site requires a prior NS3 protease-mediated cleavage at the 4A-2K site. N-glycosylated. Post-translationally, N-glycosylated. The excreted form is glycosylated and this is required for efficient secretion of the protein from infected cells.

It is found in the virion. The protein localises to the host nucleus. The protein resides in the host cytoplasm. Its subcellular location is the host perinuclear region. It localises to the secreted. It is found in the virion membrane. The protein localises to the host endoplasmic reticulum membrane. Plays a role in virus budding by binding to the cell membrane and gathering the viral RNA into a nucleocapsid that forms the core of a mature virus particle. During virus entry, may induce genome penetration into the host cytoplasm after hemifusion induced by the surface proteins. Can migrate to the cell nucleus where it modulates host functions. Overcomes the anti-viral effects of host EXOC1 by sequestering and degrading the latter through the proteasome degradation pathway. In terms of biological role, inhibits RNA silencing by interfering with host Dicer. Functionally, prevents premature fusion activity of envelope proteins in trans-Golgi by binding to envelope protein E at pH6.0. After virion release in extracellular space, gets dissociated from E dimers. Its function is as follows. Acts as a chaperone for envelope protein E during intracellular virion assembly by masking and inactivating envelope protein E fusion peptide. prM is the only viral peptide matured by host furin in the trans-Golgi network probably to avoid catastrophic activation of the viral fusion activity in acidic GolGi compartment prior to virion release. prM-E cleavage is inefficient, and many virions are only partially matured. These uncleaved prM would play a role in immune evasion. May play a role in virus budding. Exerts cytotoxic effects by activating a mitochondrial apoptotic pathway through M ectodomain. May display a viroporin activity. In terms of biological role, binds to host cell surface receptor and mediates fusion between viral and cellular membranes. Envelope protein is synthesized in the endoplasmic reticulum in the form of heterodimer with protein prM. They play a role in virion budding in the ER, and the newly formed immature particle is covered with 60 spikes composed of heterodimer between precursor prM and envelope protein E. The virion is transported to the Golgi apparatus where the low pH causes dissociation of PrM-E heterodimers and formation of E homodimers. prM-E cleavage is inefficient, and many virions are only partially matured. These uncleaved prM would play a role in immune evasion. Functionally, involved in immune evasion, pathogenesis and viral replication. Once cleaved off the polyprotein, is targeted to three destinations: the viral replication cycle, the plasma membrane and the extracellular compartment. Essential for viral replication. Required for formation of the replication complex and recruitment of other non-structural proteins to the ER-derived membrane structures. Excreted as a hexameric lipoparticle that plays a role against host immune response. Antagonizing the complement function. Binds to the host macrophages and dendritic cells. Inhibits signal transduction originating from Toll-like receptor 3 (TLR3). Its function is as follows. Disrupts the host endothelial glycocalyx layer of host pulmonary microvascular endothelial cells, inducing degradation of sialic acid and shedding of heparan sulfate proteoglycans. NS1 induces expression of sialidases, heparanase, and activates cathepsin L, which activates heparanase via enzymatic cleavage. These effects are probably linked to the endothelial hyperpermeability observed in severe dengue disease. The protein is Genome polyprotein of Dengue virus type 1 (strain Jamaica/CV1636/1977) (DENV-1).